A 258-amino-acid polypeptide reads, in one-letter code: 3-deoxy-manno-octulosonate cytidylyltransferase (258 aa).

It belongs to the KdsB family.

The protein localises to the cytoplasm. The catalysed reaction is 3-deoxy-alpha-D-manno-oct-2-ulosonate + CTP = CMP-3-deoxy-beta-D-manno-octulosonate + diphosphate. It participates in nucleotide-sugar biosynthesis; CMP-3-deoxy-D-manno-octulosonate biosynthesis; CMP-3-deoxy-D-manno-octulosonate from 3-deoxy-D-manno-octulosonate and CTP: step 1/1. Its pathway is bacterial outer membrane biogenesis; lipopolysaccharide biosynthesis. Its function is as follows. Activates KDO (a required 8-carbon sugar) for incorporation into bacterial lipopolysaccharide in Gram-negative bacteria. The sequence is that of 3-deoxy-manno-octulosonate cytidylyltransferase from Nitrobacter hamburgensis (strain DSM 10229 / NCIMB 13809 / X14).